The following is an 859-amino-acid chain: Cation/H(+) antiporter 24 (859 aa).

The next 12 helical transmembrane spans lie at Ala-64–Ile-84, Pro-92–Ile-112, Pro-122–Leu-142, Tyr-161–Met-181, Ser-194–Leu-214, Phe-227–Glu-247, Tyr-258–Val-278, Glu-291–Cys-311, Phe-312–Val-332, Thr-348–Ile-368, Phe-384–Phe-404, and Ile-438–Thr-458. The tract at residues Ile-538–Ile-566 is disordered. Residues Glu-546–Glu-557 are compositionally biased toward acidic residues. A Phosphoserine modification is found at Ser-857.

It belongs to the monovalent cation:proton antiporter 2 (CPA2) transporter (TC 2.A.37) family. CHX (TC 2.A.37.4) subfamily. In terms of tissue distribution, specifically expressed in pollen.

It is found in the membrane. Functionally, may operate as a cation/H(+) antiporter. In Arabidopsis thaliana (Mouse-ear cress), this protein is Cation/H(+) antiporter 24 (CHX24).